Here is a 309-residue protein sequence, read N- to C-terminus: Homoserine kinase (309 aa).

Position 91–101 (91–101) interacts with ATP; sequence PIGSGLGSSAC.

It belongs to the GHMP kinase family. Homoserine kinase subfamily.

It localises to the cytoplasm. The catalysed reaction is L-homoserine + ATP = O-phospho-L-homoserine + ADP + H(+). It participates in amino-acid biosynthesis; L-threonine biosynthesis; L-threonine from L-aspartate: step 4/5. Catalyzes the ATP-dependent phosphorylation of L-homoserine to L-homoserine phosphate. The protein is Homoserine kinase of Buchnera aphidicola subsp. Acyrthosiphon pisum (strain APS) (Acyrthosiphon pisum symbiotic bacterium).